The sequence spans 441 residues: Deoxyguanosinetriphosphate triphosphohydrolase-like protein 1 (441 aa).

An HD domain is found at 62 to 255 (RLTHSLEAAQ…MELADDIAYG (194 aa)).

Belongs to the dGTPase family. Type 2 subfamily.

This Vibrio cholerae serotype O1 (strain ATCC 39315 / El Tor Inaba N16961) protein is Deoxyguanosinetriphosphate triphosphohydrolase-like protein 1.